We begin with the raw amino-acid sequence, 565 residues long: Thiol:disulfide interchange protein DsbD (565 aa).

The first 19 residues, 1–19 (MAQRIFTLILLLCSTSVFA), serve as a signal peptide directing secretion. 2 disulfide bridges follow: Cys-122/Cys-128 and Cys-182/Cys-304. Transmembrane regions (helical) follow at residues 163-183 (LPFS…TPCV), 208-228 (LLTF…GLVV), 243-263 (YVLI…FGLF), 289-309 (GVFI…TAPL), 323-343 (WLGG…LMLI), 357-377 (WMEQ…VFLL), and 384-404 (IWGL…AFIT). A Thioredoxin domain is found at 434 to 565 (WAFGATHTAQ…FSAHLRDRQP (132 aa)). A disulfide bridge connects residues Cys-480 and Cys-483.

Belongs to the thioredoxin family. DsbD subfamily.

Its subcellular location is the cell inner membrane. The enzyme catalyses [protein]-dithiol + NAD(+) = [protein]-disulfide + NADH + H(+). It carries out the reaction [protein]-dithiol + NADP(+) = [protein]-disulfide + NADPH + H(+). Functionally, required to facilitate the formation of correct disulfide bonds in some periplasmic proteins and for the assembly of the periplasmic c-type cytochromes. Acts by transferring electrons from cytoplasmic thioredoxin to the periplasm. This transfer involves a cascade of disulfide bond formation and reduction steps. The polypeptide is Thiol:disulfide interchange protein DsbD (Escherichia coli O6:H1 (strain CFT073 / ATCC 700928 / UPEC)).